A 516-amino-acid polypeptide reads, in one-letter code: MKKLRASVRSHKKQPANHKRRGKCALSSSQAKPSGLDGLAKQKREELLKTPVSPYHLFSDIADVTAFRRNLLSWYDQEKRDLPWRKRVKEETNLDRRAYAVWVSEVMLQQTQVATVIDYYTRWMQKWPTLQDLASASLEEVNQLWSGLGYYSRGRRLQEGARKVVEELGGHVPRTAETLQQLLPGVGRYTAGAIASIAFDQVTGVVDGNVIRVLCRVRAIGADPTSSFVSHHLWDLAQQLVDPARPGDFNQAAMELGATVCTPQRPLCNHCPVQSLCRAHQRVGQGRLSALPGSPDIEECALNTRQCQLCLPSTNPWDPNMGVVNFPRKASRRPPREEYSATCVVEQPGATGGPLILLVQRPNSGLLAGLWEFPSVTLEPSGQHQHKALLQELQHWSAPLPTTPLQHLGEVIHVFSHIKLTYQVYSLALEGQTPASTTLPGARWLTWEEFRNAAVSTAMKKVFRVYEEHRRGTCKGSKRPQVCTPSSRKKPSRGQQVLDRFFQRHIPTHKPNSTTQ.

The span at 1-23 (MKKLRASVRSHKKQPANHKRRGK) shows a compositional bias: basic residues. The tract at residues 1 to 38 (MKKLRASVRSHKKQPANHKRRGKCALSSSQAKPSGLDG) is disordered. The Proton donor/acceptor role is filled by Glu-105. Residues Cys-261, Cys-268, Cys-271, and Cys-277 each contribute to the [4Fe-4S] cluster site. Residues 335 to 467 (PREEYSATCV…AMKKVFRVYE (133 aa)) form the Nudix hydrolase domain. The Nudix box signature appears at 376–398 (VTLEPSGQHQHKALLQELQHWSA). A disordered region spans residues 474–516 (CKGSKRPQVCTPSSRKKPSRGQQVLDRFFQRHIPTHKPNSTTQ).

It belongs to the Nth/MutY family. [4Fe-4S] cluster serves as cofactor. As to expression, expressed in brain, spleen, heart, liver and kidney.

It is found in the nucleus. The protein localises to the mitochondrion. It catalyses the reaction Hydrolyzes free adenine bases from 7,8-dihydro-8-oxoguanine:adenine mismatched double-stranded DNA, leaving an apurinic site.. Involved in oxidative DNA damage repair. Initiates repair of A*oxoG to C*G by removing the inappropriately paired adenine base from the DNA backbone. Possesses both adenine and 2-OH-A DNA glycosylase activities. In Rattus norvegicus (Rat), this protein is Adenine DNA glycosylase (Mutyh).